Here is a 321-residue protein sequence, read N- to C-terminus: Putative sulfotransferase vep-2 (321 aa).

A helical transmembrane segment spans residues 11–31 (IARVLIIIASISVICITLFIS).

To C.elegans C41C4.1 and C18B2.2.

It localises to the membrane. The polypeptide is Putative sulfotransferase vep-2 (Caenorhabditis elegans).